We begin with the raw amino-acid sequence, 144 residues long: Sentan (144 aa).

The disordered stretch occupies residues 1–31; the sequence is MCGCRASVPSTKHYSVNPAPTTRSPPAAAGM. The segment covering 18-29 has biased composition (low complexity); the sequence is PAPTTRSPPAAA.

The protein belongs to the S-100 family.

It localises to the cell projection. It is found in the cilium. Its function is as follows. May be a component of the linker structure that bridges the ciliary membrane and peripheral singlet microtubules. The chain is Sentan from Gallus gallus (Chicken).